Reading from the N-terminus, the 198-residue chain is Glycerol-3-phosphate acyltransferase 2 (198 aa).

The next 4 helical transmembrane spans lie at 4–24, 71–91, 113–133, and 147–167; these read TYLL…LVVG, LPMV…AVLG, LLCY…TLLF, and VVAV…AMCL.

This sequence belongs to the PlsY family. In terms of assembly, probably interacts with PlsX.

The protein localises to the cell membrane. The enzyme catalyses an acyl phosphate + sn-glycerol 3-phosphate = a 1-acyl-sn-glycero-3-phosphate + phosphate. It participates in lipid metabolism; phospholipid metabolism. Its function is as follows. Catalyzes the transfer of an acyl group from acyl-phosphate (acyl-PO(4)) to glycerol-3-phosphate (G3P) to form lysophosphatidic acid (LPA). This enzyme utilizes acyl-phosphate as fatty acyl donor, but not acyl-CoA or acyl-ACP. This Bacillus cereus (strain ZK / E33L) protein is Glycerol-3-phosphate acyltransferase 2.